The primary structure comprises 563 residues: Arginine--tRNA ligase (563 aa).

Residues proline 121–histidine 131 carry the 'HIGH' region motif.

It belongs to the class-I aminoacyl-tRNA synthetase family. In terms of assembly, monomer.

The protein resides in the cytoplasm. It catalyses the reaction tRNA(Arg) + L-arginine + ATP = L-arginyl-tRNA(Arg) + AMP + diphosphate. This chain is Arginine--tRNA ligase, found in Streptococcus pyogenes serotype M6 (strain ATCC BAA-946 / MGAS10394).